Here is a 579-residue protein sequence, read N- to C-terminus: Rhoptry surface protein CERLI2 (579 aa).

Residues 52 to 84 (LHNYRTFYLLIKINEIFNINKYKQIYIIVNTDK) enclose the C2 domain. A run of 11 repeats spans residues 442–451 (QTDEIKNDNI), 452–461 (QTDEIKNDHI), 462–471 (QTDEIKNDNI), 472–481 (QTDEIKNDNI), 482–491 (QTDEIKNDHI), 492–501 (QTDEIKNDNI), 502–511 (QTDEIKNDNI), 522–531 (QTDEINNDHI), 532–541 (QTDEIKNDHI), 542–551 (QTDEIKNDHI), and 552–561 (QTDEIKNDIN). Residues 442-561 (QTDEIKNDNI…QTDEIKNDIN (120 aa)) are 12 X 10 AA tandem repeat of Q-T-E-I-[K/N]-N-D-[H/N/I][I/N].

It localises to the cytoplasmic vesicle. Its subcellular location is the secretory vesicle. The protein resides in the rhoptry membrane. It is found in the cell membrane. The protein localises to the host cell membrane. Its function is as follows. Plays an important role in rhoptry physiology and thus is essential for merozoite invasion of host erythrocytes. The polypeptide is Rhoptry surface protein CERLI2 (Plasmodium falciparum (isolate 3D7)).